We begin with the raw amino-acid sequence, 31 residues long: Cytochrome b6-f complex subunit 6 (31 aa).

The helical transmembrane segment at 4–24 (ITSYFGFLLAALTITSALFIG) threads the bilayer.

This sequence belongs to the PetL family. The 4 large subunits of the cytochrome b6-f complex are cytochrome b6, subunit IV (17 kDa polypeptide, PetD), cytochrome f and the Rieske protein, while the 4 small subunits are PetG, PetL, PetM and PetN. The complex functions as a dimer.

The protein resides in the plastid. The protein localises to the chloroplast thylakoid membrane. In terms of biological role, component of the cytochrome b6-f complex, which mediates electron transfer between photosystem II (PSII) and photosystem I (PSI), cyclic electron flow around PSI, and state transitions. PetL is important for photoautotrophic growth as well as for electron transfer efficiency and stability of the cytochrome b6-f complex. The protein is Cytochrome b6-f complex subunit 6 of Citrus sinensis (Sweet orange).